We begin with the raw amino-acid sequence, 58 residues long: MSEIRVKENESLEQALRRFKRQCARAGVLSEVRKREHYEKPSVKRKKKSEAARKRKFK.

The tract at residues 30-58 is disordered; sequence SEVRKREHYEKPSVKRKKKSEAARKRKFK. Basic and acidic residues predominate over residues 31 to 42; that stretch reads EVRKREHYEKPS. Positions 43–58 are enriched in basic residues; that stretch reads VKRKKKSEAARKRKFK.

This sequence belongs to the bacterial ribosomal protein bS21 family.

The polypeptide is Small ribosomal subunit protein bS21 (Clostridium perfringens (strain ATCC 13124 / DSM 756 / JCM 1290 / NCIMB 6125 / NCTC 8237 / Type A)).